A 448-amino-acid chain; its full sequence is Fibulin-5 (448 aa).

A signal peptide spans 1 to 23 (MPGIKRILTVTILALCLPSPGNA). Residues 42–82 (DIDECRTIPEACRGDMMCVNQNGGYLCIPRTNPVYRGPYSN) enclose the EGF-like 1; calcium-binding domain. Cystine bridges form between Cys46–Cys59, Cys53–Cys68, Cys131–Cys144, Cys138–Cys153, Cys155–Cys166, Cys172–Cys181, Cys177–Cys190, Cys192–Cys205, Cys211–Cys221, Cys217–Cys230, Cys232–Cys245, Cys251–Cys262, Cys258–Cys271, Cys273–Cys286, Cys292–Cys305, Cys299–Cys314, and Cys320–Cys332. Positions 54–56 (RGD) match the Cell attachment site motif. The 41-residue stretch at 127–167 (DVDECATDSHQCNPTQICINTEGGYTCSCTDGYWLLEGQCL) folds into the EGF-like 2; calcium-binding domain. In terms of domain architecture, EGF-like 3; calcium-binding spans 168 to 206 (DIDECRYGYCQQLCANVPGSYSCTCNPGFTLNEDGRSCQ). The EGF-like 4; calcium-binding domain maps to 207 to 246 (DVNECATENPCVQTCVNTYGSFICRCDPGYELEEDGVHCS). Residues 245–448 (CSDMDECSFS…LRIYVSQYPF (204 aa)) are interaction with LOXL1. One can recognise an EGF-like 5; calcium-binding domain in the interval 247 to 287 (DMDECSFSEFLCQHECVNQPGTYFCSCPPGYILLDDNRSCQ). Residues Asn283 and Asn296 are each glycosylated (N-linked (GlcNAc...) asparagine). The region spanning 288–333 (DINECEHRNHTCNLQQTCYNLQGGFKCIDPIRCEEPYLRISDNRCM) is the EGF-like 6; calcium-binding domain.

Belongs to the fibulin family. In terms of assembly, homodimer. Monomer, homodimerizes in presence of Ca(2+). Interacts with ELN. Interacts (via N-terminus) with the integrins ITGAV/ITGB3, ITGAV/ITGB5 and ITGA9/ITGB1. Interacts with FBN1 (via N-terminal domain). Forms a ternary complex with ELN and FBN1. Interacts with EFEMP2 with moderate affinity. Interacts with LOXL1. In terms of processing, N-glycosylated. Expressed in skin fibroblasts (at protein level). Expressed predominantly in heart, ovary, and colon but also in kidney, pancreas, testis, lung and placenta. Not detectable in brain, liver, thymus, prostate, or peripheral blood leukocytes.

It localises to the secreted. It is found in the extracellular space. Its subcellular location is the extracellular matrix. Essential for elastic fiber formation, is involved in the assembly of continuous elastin (ELN) polymer and promotes the interaction of microfibrils and ELN. Stabilizes and organizes elastic fibers in the skin, lung and vasculature. Promotes adhesion of endothelial cells through interaction of integrins and the RGD motif. Vascular ligand for integrin receptors which may play a role in vascular development and remodeling. May act as an adapter that mediates the interaction between FBN1 and ELN. The polypeptide is Fibulin-5 (FBLN5) (Homo sapiens (Human)).